Consider the following 398-residue polypeptide: Putative F-box protein At1g67450 (398 aa).

The F-box domain occupies 2-56 (TMMMSDLPNDLVEEILSRVPITSLGAVRSTCKRWNGLSKDRIVCKGDANQQFTGF).

The protein is Putative F-box protein At1g67450 of Arabidopsis thaliana (Mouse-ear cress).